The following is a 492-amino-acid chain: Trk system potassium uptake protein TrkI (492 aa).

A run of 10 helical transmembrane segments spans residues 20-40 (VLAVLWLVLAIFMAIPLLVLI), 47-67 (ALAFGLSIAIVLAAATLSWIV), 81-101 (FVLTTLSWVTISSFASLPLVL), 143-163 (IMQWLGGIGIIVMGIAILPFL), 196-216 (IYCGFTLLAAMAYYLGGMSPL), 246-266 (QLLWMGSLFMLCGALPFVLYI), 282-302 (VQGLLLLLLLVILALTIWRVS), 334-354 (AWGATAYVAFFYLTFVGGCSG), 403-423 (VVAFSFFFFLTVAGLALGLSL), and 465-485 (WLLCVGMLMGRLEILTVLVLL).

It belongs to the TrkH potassium transport family.

The protein localises to the cell inner membrane. In terms of biological role, medium-affinity potassium transport system. Probably interacts with Trk system potassium uptake protein TrkA. Main K(+) transporter in osmotically adapted cells. This is Trk system potassium uptake protein TrkI (trkI) from Halomonas elongata (strain ATCC 33173 / DSM 2581 / NBRC 15536 / NCIMB 2198 / 1H9).